The following is a 79-amino-acid chain: Hematopoietic cell signal transducer (79 aa).

The first 18 residues, 1-18 (MIHPGHILFLLLLPVAAA), serve as a signal peptide directing secretion. At 19 to 34 (QTTPGSCSGCGSLSLP) the chain is on the extracellular side. Residues 35 to 55 (LLAGLVAADAVASPLIVGAVF) form a helical membrane-spanning segment. Topologically, residues 56–79 (LCARPRRSPAQGDGKVYINMPGRG) are cytoplasmic. Residue tyrosine 72 is modified to Phosphotyrosine. Positions 72 to 74 (YIN) are GRB2 binding site. The interval 72–75 (YINM) is PIK3R1 binding site.

This sequence belongs to the DAP10 family. Homodimer; Disulfide-linked. Heterohexamer composed of four subunits of HCST/DAP10 and two subunits of KLRK1. Interacts (via transmembrane domain) with KLRK1 (via transmembrane domain); the interaction is required for KLRK1 NK cell surface and induces NK cell-mediated cytotoxicity. Interacts with PIK3R1 and GRB2. Interacts with CLEC5A. Forms an CLEC5A/TYROBP/HCST trimolecular complex depending almost solely on TYROBP. Interacts with CD300H. In terms of processing, phosphorylated; PIK3R1 and GRB2 associate specifically with tyrosine-phosphorylated HCST. Post-translationally, O-glycosylated.

The protein localises to the membrane. In terms of biological role, transmembrane adapter protein which associates with KLRK1 to form an activation receptor KLRK1-HCST in lymphoid and myeloid cells; this receptor plays a major role in triggering cytotoxicity against target cells expressing cell surface ligands such as MHC class I chain-related MICA and MICB, and UL16-binding proteins (ULBPs); these ligands are up-regulated by stress conditions and pathological state such as viral infection and tumor transformation. Functions as a docking site for PI3-kinase PIK3R1 and GRB2. Interaction of ULBPs with KLRK1-HCST triggers calcium mobilization and activation of the PIK3R1, MAP2K/ERK, and JAK2/STAT5 signaling pathways. Both PIK3R1 and GRB2 are required for full KLRK1-HCST-mediated activation and ultimate killing of target cells. In NK cells, KLRK1-HCST signaling directly induces cytotoxicity and enhances cytokine production initiated via DAP12/TYROBP-associated receptors. In T-cells, it provides primarily costimulation for TCR-induced signals. KLRK1-HCST receptor plays a role in immune surveillance against tumors and is required for cytolysis of tumors cells; indeed, melanoma cells that do not express KLRK1 ligands escape from immune surveillance mediated by NK cells. In Macaca mulatta (Rhesus macaque), this protein is Hematopoietic cell signal transducer (HCST).